A 418-amino-acid polypeptide reads, in one-letter code: Glutamyl-tRNA reductase (418 aa).

Substrate-binding positions include 49–52, Ser109, 114–116, and Gln120; these read TCNR and EPQ. Residue Cys50 is the Nucleophile of the active site. 189–194 is an NADP(+) binding site; the sequence is GAGETI.

The protein belongs to the glutamyl-tRNA reductase family. As to quaternary structure, homodimer.

The enzyme catalyses (S)-4-amino-5-oxopentanoate + tRNA(Glu) + NADP(+) = L-glutamyl-tRNA(Glu) + NADPH + H(+). Its pathway is porphyrin-containing compound metabolism; protoporphyrin-IX biosynthesis; 5-aminolevulinate from L-glutamyl-tRNA(Glu): step 1/2. In terms of biological role, catalyzes the NADPH-dependent reduction of glutamyl-tRNA(Glu) to glutamate 1-semialdehyde (GSA). This chain is Glutamyl-tRNA reductase, found in Klebsiella pneumoniae (strain 342).